The following is a 70-amino-acid chain: uncharacterized protein (70 aa).

This is an uncharacterized protein from Sinorhizobium fredii (strain NBRC 101917 / NGR234).